The following is a 121-amino-acid chain: MSITKDQIIEAVSAMSVMDVVELISAMEEKFGVSAAAAVAVAAGPVEAAEEKTEFDVILKAAGANKVAVIKAVRGATGLGLKEAKDLVESAPAALKEGISKDDAEALKKSLEEAGAEVEVK.

It belongs to the bacterial ribosomal protein bL12 family. As to quaternary structure, homodimer. Part of the ribosomal stalk of the 50S ribosomal subunit. Forms a multimeric L10(L12)X complex, where L10 forms an elongated spine to which 2 to 4 L12 dimers bind in a sequential fashion. Binds GTP-bound translation factors.

Forms part of the ribosomal stalk which helps the ribosome interact with GTP-bound translation factors. Is thus essential for accurate translation. The polypeptide is Large ribosomal subunit protein bL12 (Klebsiella pneumoniae (strain 342)).